The following is a 491-amino-acid chain: NADH-quinone oxidoreductase subunit N (491 aa).

Transmembrane regions (helical) follow at residues 11 to 31 (ATAEIFVAVMALVIMLATTFA), 38 to 58 (LAYGLTLVTLIGAAIITYNTA), 74 to 94 (LLGDVLKLLIYFSMAVALLYG), 106 to 126 (PEYYVLALLMTLGMMVMVTSN), 128 to 148 (LLSMYIGLELMSLSLYALVAF), 163 to 183 (FVLGALASGLLLYGMSMLYGA), 206 to 226 (LLFGLVFLMAGICFKLGVVPF), 243 to 263 (LIIATAPKLAAFAMAVRLLVW), 272 to 292 (WQTMLMFVAVLSIVLGNLAAI), 301 to 321 (LAYSGISHMGFMLLGLLSGVV), 336 to 356 (MFYAISYVIMSLASFGMIILL), 379 to 399 (FAAMMMFVMFSMAGIPFFIGF), 410 to 430 (VAAGYIWVAVVAVLMSVIGAF), and 465 to 485 (LAIAAIGLAPQGVMTLCTFVL).

This sequence belongs to the complex I subunit 2 family. NDH-1 is composed of 14 different subunits. Subunits NuoA, H, J, K, L, M, N constitute the membrane sector of the complex.

It localises to the cell inner membrane. It carries out the reaction a quinone + NADH + 5 H(+)(in) = a quinol + NAD(+) + 4 H(+)(out). Its function is as follows. NDH-1 shuttles electrons from NADH, via FMN and iron-sulfur (Fe-S) centers, to quinones in the respiratory chain. The immediate electron acceptor for the enzyme in this species is believed to be ubiquinone. Couples the redox reaction to proton translocation (for every two electrons transferred, four hydrogen ions are translocated across the cytoplasmic membrane), and thus conserves the redox energy in a proton gradient. The protein is NADH-quinone oxidoreductase subunit N of Azoarcus sp. (strain BH72).